Consider the following 912-residue polypeptide: Cadherin-2 (912 aa).

An N-terminal signal peptide occupies residues 1–28 (MCRIAGTPPRILPPLALMLLAALQQAPI). The propeptide occupies 29-164 (KATCEDMLCK…DSSHLKRQKR (136 aa)). Cadherin domains are found at residues 165–272 (DWVI…RPEF), 273–387 (LHQV…PPEF), 388–502 (TAMT…SPYF), 503–609 (VPNP…DNAP), and 610–720 (QVNP…DVDR). Residues 165 to 729 (DWVIPPINLP…RIVGAGLGTG (565 aa)) are Extracellular-facing. Positions 175, 231, 233, 264, 265, 266, 267, and 268 each coordinate Ca(2+). Asn278 is a glycosylation site (N-linked (GlcNAc...) asparagine). Positions 298, 300, and 306 each coordinate Ca(2+). Asn330 carries N-linked (GlcNAc...) asparagine glycosylation. Asp358 contributes to the Ca(2+) binding site. N-linked (GlcNAc...) asparagine glycosylation is found at Asn407, Asn578, Asn628, and Asn657. A helical membrane pass occupies residues 730–752 (AIIAILLCIIILLILVLMFVVWM). The Cytoplasmic segment spans residues 753–912 (KRRDKERQAK…LADMYGGGDD (160 aa)). Positions 869–886 (SGSTAGSLSSLNSSSSGG) are enriched in low complexity. A disordered region spans residues 869–890 (SGSTAGSLSSLNSSSSGGEQDY).

Homodimer (via extracellular region). Can also form heterodimers with other cadherins (via extracellular region). Dimerization occurs in trans, i.e. with a cadherin chain from another cell. Interacts with CTNNA2. As to expression, expressed at intercalated disks in the heart (at protein level).

The protein localises to the cell membrane. The protein resides in the sarcolemma. It localises to the cell junction. Its subcellular location is the cell surface. It is found in the desmosome. The protein localises to the adherens junction. Functionally, calcium-dependent cell adhesion protein; preferentially mediates homotypic cell-cell adhesion. Cadherins may thus contribute to the sorting of heterogeneous cell types, and thereby play an important role during embryonic development. Required for proper neurite branching, and pre- and postsynaptic organization. The chain is Cadherin-2 (CDH2) from Gallus gallus (Chicken).